The primary structure comprises 196 residues: Ribosome maturation factor RimM (196 aa).

The PRC barrel domain maps to 118-196 (QGEYYWRDLI…EMTVDWDPDF (79 aa)).

It belongs to the RimM family. In terms of assembly, binds ribosomal protein uS19.

It localises to the cytoplasm. An accessory protein needed during the final step in the assembly of 30S ribosomal subunit, possibly for assembly of the head region. Essential for efficient processing of 16S rRNA. May be needed both before and after RbfA during the maturation of 16S rRNA. It has affinity for free ribosomal 30S subunits but not for 70S ribosomes. This Alcanivorax borkumensis (strain ATCC 700651 / DSM 11573 / NCIMB 13689 / SK2) protein is Ribosome maturation factor RimM.